Consider the following 95-residue polypeptide: Scytovirin (95 aa).

The SD1 stretch occupies residues 3 to 41 (GPTYCWNEANNPGGPNRCSNNKQCDGARTCSSSGFCQGT). 5 cysteine pairs are disulfide-bonded: C7/C55, C20/C32, C26/C38, C68/C80, and C74/C86. The SD2 stretch occupies residues 51–89 (GPTYCWDEAKNPGGPNRCSNSKQCDGARTCSSSGFCQGT).

Its function is as follows. Has strong anti-HIV activity against T-tropic strains of HIV-1 and weaker activity against M-tropic strains of HIV-1. Inhibits HIV-1 fusion and infection of CD4 LTR beta-gal cells in vitro. Inhibits fusion of HIV infected CEM-SS cells with uninfected CEM-SS cells, and fusion of HIV-1 Env expressing HL2/3 cells with CD4 LTR beta-gal cells. Binds to HIV gp120, HIV gp160 and to a lesser extent HIV gp41. Binding to HIV gp120 is glycosylation dependent. Binds with high specificity to the tetrasaccharide Man-alpha-1,2-Man-alpha-1,6-Man-alpha-1,6-Man and also binds the higher-order oligosaccharides oligomannose 8 and oligomannose 9. Does not bind to monosaccharides, complex or hybrid N-linked oligosaccharides or chitin. The sequence is that of Scytovirin from Scytonema varium.